Here is a 557-residue protein sequence, read N- to C-terminus: Putative sensory transducer protein (557 aa).

The helical transmembrane segment at 122-145 (TASTVMIVVIFVGILIAIALGVFI) threads the bilayer. Residues 147 to 199 (RIISKPIGQMVEAADRLALGDVEVDVKAETRDEIGKLAESFKRMIENIREQAY) form the HAMP domain. The Methyl-accepting transducer domain occupies 243–472 (VAAQVAAGAK…ESAAASEELS (230 aa)). Glutamine 268 is subject to Glutamate methyl ester (Gln). Glutamate 274 carries the post-translational modification Glutamate methyl ester (Glu). Glutamine 281 bears the Glutamate methyl ester (Gln) mark. Glutamate 463 is subject to Glutamate methyl ester (Glu). The segment covering 511-541 (DYTENKQPKSYSKEENGEYSDGKETAEKDVG) has biased composition (basic and acidic residues). The interval 511 to 542 (DYTENKQPKSYSKEENGEYSDGKETAEKDVGG) is disordered.

Belongs to the methyl-accepting chemotaxis (MCP) protein family.

The protein resides in the cell membrane. In terms of biological role, may bind attractants or detect changes in the extracellular concentration of soluble sugars. The polypeptide is Putative sensory transducer protein (Acetivibrio thermocellus (strain ATCC 27405 / DSM 1237 / JCM 9322 / NBRC 103400 / NCIMB 10682 / NRRL B-4536 / VPI 7372) (Clostridium thermocellum)).